Consider the following 75-residue polypeptide: Meucin-49 (75 aa).

Positions 1-22 are cleaved as a signal peptide; the sequence is MNKKILLVIFIVTMLIVDEVNS.

Belongs to the non-disulfide-bridged peptide (NDBP) superfamily. Long chain multifunctional peptide (group 2) family. Expressed by the venom gland.

Its subcellular location is the secreted. In terms of biological role, insecticidal toxin and antimicrobial peptide with potent activity against both Gram-negative and -positive bacteria, as well as against fungi. Acts by disrupting bacterial membrane integrity. Shows broad-spectrum and highly potent bactericidal activities against the Gram-positive bacteria B.cereus, B.megaterium, B.subtilis, M.luteus, S.aureus, S.epidermidis, S.warneri, S.griseus, S.scabiei, S.mutans, S.salivarius, and S.sanguinis. Also exhibits a wide spectrum of activity against the Gram-negative bacteria A.faecalis, E.coli, P.aeruginosa, P.solanacearum, S.enterica, S.marcescens, and S.maltophilia. Also shows antimicrobial activities against the fungal strains Aspergillus flavus, A.fumigatus, A.nidulans, A.niger, Beauveria bassiana, and Saccharomyces cerevisiae. Its antibiotic activity is potentiated by other antibacterial peptides such as MeuNaTxbeta-4. Also induces cytolysis on mice, lizards and birds erythrocytes. This is Meucin-49 from Mesobuthus eupeus (Lesser Asian scorpion).